A 240-amino-acid polypeptide reads, in one-letter code: Uridylate kinase (240 aa).

Residue 12 to 15 participates in ATP binding; it reads KLSG. G54 is a UMP binding site. 2 residues coordinate ATP: G55 and R59. Residues D74 and 135 to 142 contribute to the UMP site; that span reads TGNPFFTT. Residues T162, Y168, and D171 each coordinate ATP.

This sequence belongs to the UMP kinase family. As to quaternary structure, homohexamer.

It localises to the cytoplasm. It carries out the reaction UMP + ATP = UDP + ADP. Its pathway is pyrimidine metabolism; CTP biosynthesis via de novo pathway; UDP from UMP (UMPK route): step 1/1. Its activity is regulated as follows. Inhibited by UTP. Functionally, catalyzes the reversible phosphorylation of UMP to UDP. The protein is Uridylate kinase of Xanthomonas axonopodis pv. citri (strain 306).